A 572-amino-acid chain; its full sequence is Mitochondrial chaperone TCM62 (572 aa).

The N-terminal 16 residues, 1-16, are a transit peptide targeting the mitochondrion; the sequence is MLRNCLRKLGNHQTKC. At 17 to 471 the chain is on the mitochondrial matrix side; that stretch reads SVKTLHTPIY…KANEPNFMTK (455 aa). Residues 472 to 488 form a helical membrane-spanning segment; that stretch reads VGINAVLSAVILPSEVA. The Mitochondrial intermembrane portion of the chain corresponds to 489 to 572; sequence FKNAYGYNYY…VYKKPERHKA (84 aa).

This sequence belongs to the chaperonin (HSP60) family. In terms of assembly, forms a high molecular mass protein complex of approximately 850 kDa.

Its subcellular location is the mitochondrion inner membrane. Its function is as follows. Chaperone. Required for the assembly of succinate dehydrogenase subunits. Ensures mitochondrial gene expression at elevated temperatures and prevents heat-aggregation of the ribosomal subunit VAR1. The polypeptide is Mitochondrial chaperone TCM62 (TCM62) (Saccharomyces cerevisiae (strain YJM789) (Baker's yeast)).